Here is a 199-residue protein sequence, read N- to C-terminus: Transcription factor 15 (199 aa).

The segment at 25–67 (EENRSESDASDQSFGCCEGPEAARRGPGPGGGRRAGGGGGAGP) is disordered. Positions 51 to 66 (PGPGGGRRAGGGGGAG) are enriched in gly residues. Residues 72–124 (RQRQAANARERDRTQSVNTAFTALRTLIPTEPVDRKLSKIETVRLASSYIAHL) enclose the bHLH domain.

As to quaternary structure, heterodimer; efficient DNA binding requires dimerization with another bHLH protein, such as TCF3/E12. Interacts with MEOX2.

The protein localises to the nucleus. In terms of biological role, early transcription factor that plays a key role in somitogenesis, paraxial mesoderm development and regulation of stem cell pluripotency. Essential for the mesenchymal to epithelial transition associated with somite formation. Required for somite morphogenesis, thereby regulating patterning of the axial skeleton and skeletal muscles. Required for proper localization of somite epithelium markers during the mesenchymal to epithelial transition. Also plays a key role in regulation of stem cell pluripotency. Promotes pluripotency exit of embryonic stem cells (ESCs) by priming ESCs for differentiation. Acts as a key regulator of self-renewal of hematopoietic stem cells (HSCs) by mediating HSCs quiescence and long-term self-renewal. Together with MEOX2, regulates transcription in heart endothelial cells to regulate fatty acid transport across heart endothelial cells. Acts by forming a heterodimer with another helix-loop-helix (bHLH) protein, such as TCF3/E12, that binds DNA on E-box motifs (5'-CANNTG-3') and activates transcription of target genes. The sequence is that of Transcription factor 15 from Homo sapiens (Human).